The chain runs to 1099 residues: Contactin-5 (1099 aa).

The signal sequence occupies residues M1–S18. Ig-like C2-type domains lie at P99–Q190, N196–S282, P300–Q385, P390–K474, P480–K569, and P571–S660. C123 and C173 are disulfide-bonded. Residues N138 and N196 are each glycosylated (N-linked (GlcNAc...) asparagine). Cystine bridges form between C217–C269 and C322–C369. N-linked (GlcNAc...) asparagine glycosylation is found at N397, N449, and N540. Cystine bridges form between C411–C458, C503–C551, and C593–C650. Fibronectin type-III domains follow at residues P673–A771, A776–G873, A878–H972, and P977–G1067. Residues N779, N816, and N931 are each glycosylated (N-linked (GlcNAc...) asparagine). A disordered region spans residues Y958–W983. N1002 carries an N-linked (GlcNAc...) asparagine glycan. Residue S1072 is the site of GPI-anchor amidated serine attachment. The propeptide at A1073 to W1099 is removed in mature form.

Belongs to the immunoglobulin superfamily. Contactin family. As to quaternary structure, interacts with PTPRG. Specifically expressed in the nervous system. Expressed in cerebrum and cerebellum but at low level in spinal cord. In brain, it is expressed in highly restricted regions at postnatal day 7, such as the auditory pathway, including the cochlear nucleus, superior olive, inferior colliculus, medial geniculate nucleus and auditory cortex. Expressed in the accessory olfactory bulb, glomerular and mitral cell layers in the olfactory bulb, anterior thalamic nuclei, layers II-IV of the cerebral cortex, dentate gyrus of the hippocampus and external granule cells and Purkinje cells of the cerebellum. Also expressed in the piriform cortex, inferior olive and facial nucleus. Weakly or not expressed in other parts of the brain.

The protein resides in the cell membrane. In terms of biological role, contactins mediate cell surface interactions during nervous system development. Has some neurite outgrowth-promoting activity in the cerebral cortical neurons but not in hippocampal neurons. Probably involved in neuronal activity in the auditory system. The sequence is that of Contactin-5 (Cntn5) from Rattus norvegicus (Rat).